We begin with the raw amino-acid sequence, 307 residues long: Protoheme IX farnesyltransferase (307 aa).

The next 9 helical transmembrane spans lie at 31–51, 53–73, 103–123, 125–145, 153–173, 179–199, 223–243, 246–266, and 285–305; these read VTQLAVFCAIIGMFLATPGMV, WPVLIGGAAGIWLLAGAAFAI, TLVFSAILGGAGMWLLHVYAN, LTMWLTFATFLGYAVVYTILL, IVIGGLSGAMPPALGWAAVAG, AWFLVLIIFTWTPPHFWALAL, LLHILLYTLIMIAATLLPFVY, SGYIYLAAALALGAGFLAYAW, and ILYLSLLFAALLVDHYFKFVP.

Belongs to the UbiA prenyltransferase family. Protoheme IX farnesyltransferase subfamily.

The protein resides in the cell inner membrane. It carries out the reaction heme b + (2E,6E)-farnesyl diphosphate + H2O = Fe(II)-heme o + diphosphate. It participates in porphyrin-containing compound metabolism; heme O biosynthesis; heme O from protoheme: step 1/1. In terms of biological role, converts heme B (protoheme IX) to heme O by substitution of the vinyl group on carbon 2 of heme B porphyrin ring with a hydroxyethyl farnesyl side group. The protein is Protoheme IX farnesyltransferase of Cupriavidus taiwanensis (strain DSM 17343 / BCRC 17206 / CCUG 44338 / CIP 107171 / LMG 19424 / R1) (Ralstonia taiwanensis (strain LMG 19424)).